Consider the following 331-residue polypeptide: Dioxygenase swnH2 (331 aa).

Residues 1–11 (MINSDAQSAQK) show a composition bias toward polar residues. Positions 1–31 (MINSDAQSAQKQVEVEKPDEKYSAPRLLPPI) are disordered. Over residues 13–23 (VEVEKPDEKYS) the composition is skewed to basic and acidic residues. His173, Asp175, and His250 together coordinate Fe cation.

It belongs to the PhyH family. Homodimer. Fe cation serves as cofactor.

It participates in mycotoxin biosynthesis. In terms of biological role, dioxygenase; part of the gene cluster that mediates the biosynthesis of swainsonine (SW), a cytotoxic fungal alkaloid and a potential cancer therapy drug. Swainsonine production occurs via a multibranched pathway and is dispensable for fungal colonization of plants and infection of insect hosts. The first step of swainsonine biosynthesis is the production of the precursor pipecolic acid (PA) via conversion of L-lysine (Lys) to 1-piperideine-6-carboxylate (P6C) by the aminotransferase swnA, the latter being further reduced to PA by the reductase swnR. PA can be converted from lysine by both the SW biosynthetic cluster and the unclustered genes such as lysine cyclodeaminase. The PKS-NRPS hybrid synthetase swnK uptakes and condensates PA and malonyl-CoA with and without skipping of the ketoreductase (KR) domain in order to produce 3 intermediates, 1-oxoindolizidine, (1S)-1-hydroxyindolizin, and (1R)-1-hydroxyindolizine; with the transisomer (1S)-1-hydroxyindolizin being predominant. The terminal thioester reductase (TE) domain of swnK is involved in reduction of the thioester bond to release the intermediate aldehydes. The oxidoreductase swnN could contribute to the reduction of 1-oxoindolizidine to (1S)-1-hydroxyindolizin and (1R)-1-hydroxyindolizine, contributing to the major route of SW production. The dioxygenase swnH2 would be responsible for the oxidization of (1R)-1-hydroxyindolizine into (1R,2S)-1,2-dihydroxyindolizine and of (1S)-1-hydroxyindolizin to yield both (1R,2S)-1,2-dihydroxyindolizine and (1S,2S)-1,2-dihydroxyindolizine. The dioxygenase swnH1 then performs the conversion of the 1,2-dihydroxyindolizine epimers to SW. In Metarhizium robertsii (strain ARSEF 23 / ATCC MYA-3075) (Metarhizium anisopliae (strain ARSEF 23)), this protein is Dioxygenase swnH2.